The chain runs to 340 residues: Fructose-1,6-bisphosphatase class 1 (340 aa).

Glutamate 107, aspartate 126, leucine 128, and aspartate 129 together coordinate Mg(2+). A substrate-binding site is contributed by asparagine 215. Residue glutamate 287 coordinates Mg(2+).

This sequence belongs to the FBPase class 1 family. Homotetramer. Mg(2+) serves as cofactor.

The protein resides in the cytoplasm. The enzyme catalyses beta-D-fructose 1,6-bisphosphate + H2O = beta-D-fructose 6-phosphate + phosphate. The protein operates within carbohydrate biosynthesis; gluconeogenesis. This chain is Fructose-1,6-bisphosphatase class 1, found in Brucella suis biovar 1 (strain 1330).